Here is a 402-residue protein sequence, read N- to C-terminus: DNA replication and repair protein RecF (402 aa).

An ATP-binding site is contributed by 30–37; that stretch reads GYNGIGKT.

Belongs to the RecF family.

Its subcellular location is the cytoplasm. The RecF protein is involved in DNA metabolism; it is required for DNA replication and normal SOS inducibility. RecF binds preferentially to single-stranded, linear DNA. It also seems to bind ATP. This is DNA replication and repair protein RecF from Pseudarthrobacter chlorophenolicus (strain ATCC 700700 / DSM 12829 / CIP 107037 / JCM 12360 / KCTC 9906 / NCIMB 13794 / A6) (Arthrobacter chlorophenolicus).